The chain runs to 611 residues: Creatine transporter (611 aa).

Residues Phe-45–Leu-65 traverse the membrane as a helical segment. Residues Cys-66–Gly-71 are Extracellular-facing. The chain crosses the membrane as a helical span at residues Gly-72–Leu-92. Residues Glu-93 to Met-122 lie on the Cytoplasmic side of the membrane. The helical transmembrane segment at Val-123–Leu-143 threads the bilayer. Topologically, residues Val-144–Glu-207 are extracellular. 2 N-linked (GlcNAc...) asparagine glycosylation sites follow: Asn-157 and Asn-171. Residues Ile-208–Trp-228 form a helical membrane-spanning segment. At Lys-229–Tyr-246 the chain is on the cytoplasmic side. Residues Ile-247–Val-267 form a helical membrane-spanning segment. Topologically, residues Tyr-268–Gln-281 are extracellular. The chain crosses the membrane as a helical span at residues Val-282–Thr-302. Residues Ala-303–Ala-318 lie on the Cytoplasmic side of the membrane. A helical membrane pass occupies residues Phe-319–Ile-339. Over Leu-340 to Thr-371 the chain is Extracellular. A helical transmembrane segment spans residues Leu-372–Leu-392. Topologically, residues Gly-393–Glu-421 are cytoplasmic. Residues Val-422–Gly-442 traverse the membrane as a helical segment. At Gly-443–Ser-456 the chain is on the extracellular side. The helical transmembrane segment at Gly-457 to Gly-477 threads the bilayer. Residues Asp-478 to Lys-497 lie on the Cytoplasmic side of the membrane. A helical membrane pass occupies residues Trp-498–Asn-518. Residues Tyr-519–Ile-537 lie on the Extracellular side of the membrane. N-linked (GlcNAc...) asparagine glycosylation occurs at Asn-525. The helical transmembrane segment at Gly-538–Ser-558 threads the bilayer. The Cytoplasmic segment spans residues Arg-559–Leu-611.

The protein belongs to the sodium:neurotransmitter symporter (SNF) (TC 2.A.22) family.

It is found in the membrane. Functionally, required for the uptake of creatine. This is Creatine transporter from Torpedo marmorata (Marbled electric ray).